Consider the following 140-residue polypeptide: Transcription antitermination protein NusB (140 aa).

This sequence belongs to the NusB family.

In terms of biological role, involved in transcription antitermination. Required for transcription of ribosomal RNA (rRNA) genes. Binds specifically to the boxA antiterminator sequence of the ribosomal RNA (rrn) operons. In Streptococcus pneumoniae (strain JJA), this protein is Transcription antitermination protein NusB.